Here is a 298-residue protein sequence, read N- to C-terminus: MTRLRIDLAYNGAAFHGWAAQPGCRTVQGTVEEALRRITRMPDAGSLRLTVAGRTDAGVHATHQVCHVDVPDQTLGQCVGHMNLTPVQALQTRLSRMMPDDIAIHGISVAPAGFDARFSALERTYVYRIADARVPWDPRLKDFAWRTDRELDIAQMNAAAALTLGLHDFGSFAIANPGGTTIREVKTAYWQRVPTRPLLGPGMGERYHTPAVESGLLCFTIVADAFARNMVRSLVGACVQVGMGKRDVDWFAGKMRVPLREGSTGPIAPQGLTLEHIAYPADDELAARAERIRAKRTL.

The Nucleophile role is filled by aspartate 56. Tyrosine 125 serves as a coordination point for substrate.

The protein belongs to the tRNA pseudouridine synthase TruA family. In terms of assembly, homodimer.

It carries out the reaction uridine(38/39/40) in tRNA = pseudouridine(38/39/40) in tRNA. Formation of pseudouridine at positions 38, 39 and 40 in the anticodon stem and loop of transfer RNAs. This chain is tRNA pseudouridine synthase A, found in Bifidobacterium animalis subsp. lactis (strain AD011).